Reading from the N-terminus, the 308-residue chain is HPr kinase/phosphorylase (308 aa).

Catalysis depends on residues H141 and K162. An ATP-binding site is contributed by 156-163 (GKSGVGKS). S163 serves as a coordination point for Mg(2+). D180 (proton acceptor; for phosphorylation activity. Proton donor; for dephosphorylation activity) is an active-site residue. Residues 204–213 (MEIRGVGILD) form an important for the catalytic mechanism of both phosphorylation and dephosphorylation region. E205 provides a ligand contact to Mg(2+). R246 is an active-site residue. Positions 267–272 (PVKPGR) are important for the catalytic mechanism of dephosphorylation.

This sequence belongs to the HPrK/P family. Homohexamer. It depends on Mg(2+) as a cofactor.

It catalyses the reaction [HPr protein]-L-serine + ATP = [HPr protein]-O-phospho-L-serine + ADP + H(+). It carries out the reaction [HPr protein]-O-phospho-L-serine + phosphate + H(+) = [HPr protein]-L-serine + diphosphate. Functionally, catalyzes the ATP- as well as the pyrophosphate-dependent phosphorylation of a specific serine residue in HPr, a phosphocarrier protein of the phosphoenolpyruvate-dependent sugar phosphotransferase system (PTS). HprK/P also catalyzes the pyrophosphate-producing, inorganic phosphate-dependent dephosphorylation (phosphorolysis) of seryl-phosphorylated HPr (P-Ser-HPr). The two antagonistic activities of HprK/P are regulated by several intracellular metabolites, which change their concentration in response to the absence or presence of rapidly metabolisable carbon sources (glucose, fructose, etc.) in the growth medium. Therefore, by controlling the phosphorylation state of HPr, HPrK/P is a sensor enzyme that plays a major role in the regulation of carbon metabolism and sugar transport: it mediates carbon catabolite repression (CCR), and regulates PTS-catalyzed carbohydrate uptake and inducer exclusion. This Peptoclostridium acidaminophilum (Eubacterium acidaminophilum) protein is HPr kinase/phosphorylase.